The following is a 140-amino-acid chain: Odorant-binding protein 10 (140 aa).

Positions 1 to 25 (MTSFRLANLTVFLVLLFCFMRGVHS) are cleaved as a signal peptide.

It belongs to the PBP/GOBP family. As to expression, high-level expression in female mouth parts, particularly in the proboscis (at protein level). Low-level expression in female antenna (at protein level). Female salivary gland. Female chemosensory organs: antenna, palp and proboscis. Male antenna, wing and maxillary palp. Expressed at higher levels in male tissues compared to female tissues. Not detected in midgut.

It localises to the secreted. Its function is as follows. Involved in modulation of blood-feeding behavior and capacity in female mosquitoes. Required for normal oviposition. Required for normal fecundity and fertility of female mosquitoes. Required for normal expression of VGA1 gene, which encodes the egg yolk protein vitellogenin-A1. Required for normal female longevity when mosquitoes are maintained on regular sugar meal. Functionally, (Microbial infection) Facilitates shedding of dengue virus type 2 particles into mosquito saliva. Does not affect dengue virus type 2 replication or infection prevalence in midgut and salivary glands at 14 days after blood feeding. In terms of biological role, (Microbial infection) Facilitates shedding of Zika virus particles into mosquito saliva. Does not affect Zika virus replication or infection prevalence in midgut and salivary glands at 14 days after blood feeding. This is Odorant-binding protein 10 from Aedes aegypti (Yellowfever mosquito).